The primary structure comprises 2074 residues: Cell adhesion molecule Dscam2 (2074 aa).

The N-terminal stretch at 1-21 is a signal peptide; sequence MWISSRFFVILLLLNLDNTCS. The Extracellular portion of the chain corresponds to 22-1619; it reads EPFEAHLRGP…QTTVIFANIN (1598 aa). 8 Ig-like C2-type domains span residues 31-120, 238-326, 330-417, 422-516, 521-607, 612-698, 707-802, and 805-902; these read PGFV…RIVS, PSVV…LRLT, PIQV…AELQ, PPVL…ARLN, PYIR…GEVT, PSIE…IKYT, PRWI…LKVN, and PYFS…LQVQ. 8 disulfide bridges follow: C53/C109, C259/C310, C352/C400, C444/C500, C541/C590, C633/C686, C728/C783, and C826/C884. Fibronectin type-III domains are found at residues 907–1003, 1008–1108, 1113–1211, and 1215–1311; these read PPSV…TEPQ, PPLS…TMED, PPED…SEED, and APAD…TNRI. The region spanning 1312-1400 is the Ig-like C2-type 9 domain; it reads PARIISFGGP…DRLTHTLIVQ (89 aa). A disulfide bond links C1334 and C1382. 2 consecutive Fibronectin type-III domains span residues 1402–1495 and 1496–1595; these read PPTA…TQGQ and SPGH…TKDG. Residues 1620-1640 form a helical membrane-spanning segment; it reads LLIPTIAAVSGMFCTIIMIIV. The Cytoplasmic segment spans residues 1641 to 2074; that stretch reads CYRHMLKNAP…KFFTAPTLPK (434 aa). 4 disordered regions span residues 1739-1766, 1778-1917, 1936-1974, and 2011-2074; these read EGCS…HQRP, PFHN…KSIS, SPSI…SLKQ, and PSSQ…TLPK. Basic residues predominate over residues 1757–1766; the sequence is THHHHHHQRP. Polar residues predominate over residues 1831–1846; sequence AQSSTSSDLSPMSEQK. Residues 1848–1858 are compositionally biased toward basic residues; sequence LPRRGRSRYHH. Positions 1859–1868 are enriched in polar residues; the sequence is QQYQFSTNTT. Low complexity-rich tracts occupy residues 1875–1903, 1942–1974, and 2036–2051; these read NKMN…SNSN, QQQK…SLKQ, and SQQS…QQHP. Residues 2055–2066 show a composition bias toward polar residues; the sequence is LNPSTAMLSSKF.

Its subcellular location is the membrane. Cell adhesion molecule. This chain is Cell adhesion molecule Dscam2 (Dscam2), found in Drosophila melanogaster (Fruit fly).